We begin with the raw amino-acid sequence, 878 residues long: MSESNLSSFISTNYFNLRSAANSSNSISKPSTKKSIRNQKSPTNISSWALKKKTLQIAETTWENNEKDSTHSHYLMTGSMASRTATSLSRYSTNASLLGPSIDCVLCCIYEVPRDISTRIGLCIINCNTGQMYLSDFMDSQIYIRVVHKLQIYQPTEILIPSSSLAPTVSKLATMIKFNVAETVKIEEGSRKCFNSQDGLAAITKYLMDDTKKDLKIEEIIDKTFALCAASAAISYMEEIISKSSRNLNAFRKLRIQFEGTENTMLIDSKTVRGLELVENKLDKNGISLWKFLDTTSTKMGQRSLRNSILQPLTDRGSIEMRLEALEELKANDDLLQKLRLEMKSLPDLDKLFSRLLCINHSAIKPDQRINYVLLLKETLQSVKSLKDALNDQLIQSRLISETKKIFNNDAIMEIEKLINSCINEDCVWASSAIQLLNQRSYAVKSDSNGLLDVSRQIYKEVKEEFFREVEDLTAKNKINLDHNYDSARGFYLRIKRQEFTDDVATLPDVFISRTIKKNYIECTTLNIIKKNARLKEVMEEILLLSEETVDELLDKIATHISELFMIAEAVAILDLVCSFTYNLKENNYTIPIFTNNLLIRDSRHPLLEKVLKNFVPNTISSTKHSSSLQIITGCNMSGKSVYLKQVALICIMAQMGSGIPALYGSFPVFKRLHARVCNDSMELTSSNFGFEMKEMAYFLDDINTETLLILDELGRGSSIADGFCVSLAVTEHLLRTEATVFLSTHFQDIPKIMSKKPAVSHLHMDAVLLNDNSVKMNYQLTQKSVAIENSGIRVVKKIFNPDIIAEAYNIHSLLKIAKARTENEDSNGVVDQKTINQMKRIHNLVAILKECAGNEKEPLTLGKLKEINSDFIENFEE.

The interval 22-41 is disordered; sequence NSSNSISKPSTKKSIRNQKS. 634-641 is an ATP binding site; that stretch reads GCNMSGKS.

It belongs to the DNA mismatch repair MutS family. In terms of assembly, heterooligomer of MSH4 and MSH5.

Functionally, involved in meiotic recombination. Facilitate crossovers between homologs during meiosis. This chain is MutS protein homolog 4 (MSH4), found in Saccharomyces cerevisiae (strain ATCC 204508 / S288c) (Baker's yeast).